The primary structure comprises 562 residues: Arginine--tRNA ligase (562 aa).

A 'HIGH' region motif is present at residues 129–139 (ANPTGPLHVGH).

This sequence belongs to the class-I aminoacyl-tRNA synthetase family. In terms of assembly, monomer.

Its subcellular location is the cytoplasm. The enzyme catalyses tRNA(Arg) + L-arginine + ATP = L-arginyl-tRNA(Arg) + AMP + diphosphate. The chain is Arginine--tRNA ligase (argS) from Xylella fastidiosa (strain 9a5c).